The sequence spans 1073 residues: 3-hydroxy-3-methylglutaryl-coenzyme A reductase 1 (1073 aa).

The next 8 membrane-spanning stretches (helical) occupy residues 23-43, 181-201, 211-231, 298-318, 326-346, 399-419, 459-479, and 498-518; these read FMVV…DDYI, FDIL…IKVF, FWLA…ALLV, HLVV…LTGL, SLIL…ILGL, IAYF…FWLG, GTVV…MVQL, and IISK…VYFL. The SSD domain occupies 182 to 346; it reads DILLIFVAYL…YTFFSAILGL (165 aa). Residues 542 to 565 are compositionally biased toward low complexity; sequence SSVTATTTTTATGTTSSGAATSKT. The interval 542–589 is disordered; the sequence is SSVTATTTTTATGTTSSGAATSKTIGNNKGLKSVQEIPDNEDESSDEE. Residues 579 to 589 show a composition bias toward acidic residues; sequence PDNEDESSDEE. Glutamate 714 serves as the catalytic Charge relay system. 720-726 serves as a coordination point for CoA; it reads STMRGCK. NADP(+) is bound by residues 781–783 and 808–816; these read SRF and DAMGMNMIS. Lysine 848 functions as the Charge relay system in the catalytic mechanism. Residue 877 to 879 coordinates CoA; it reads VLK. The active-site Charge relay system is the aspartate 924. The chain crosses the membrane as a helical span at residues 997–1017; it reads IVASAVLAAELSLCSALAAGH. A CoA-binding site is contributed by 1021–1022; the sequence is SH. The active-site Proton donor is histidine 1022. A disordered region spans residues 1025–1056; it reads HNRSKAPAAGATTTTTPAITDSKASNGSIASN. 1026–1027 is a binding site for NADP(+); the sequence is NR. Positions 1030-1042 are enriched in low complexity; the sequence is APAAGATTTTTPA. Positions 1046–1055 are enriched in polar residues; that stretch reads SKASNGSIAS.

This sequence belongs to the HMG-CoA reductase family.

It is found in the endoplasmic reticulum membrane. It catalyses the reaction (R)-mevalonate + 2 NADP(+) + CoA = (3S)-3-hydroxy-3-methylglutaryl-CoA + 2 NADPH + 2 H(+). The protein operates within metabolic intermediate biosynthesis; (R)-mevalonate biosynthesis; (R)-mevalonate from acetyl-CoA: step 3/3. In terms of biological role, HMG-CoA reductase; part of the first module of ergosterol biosynthesis pathway that includes the early steps of the pathway, conserved across all eukaryotes, and which results in the formation of mevalonate from acetyl-coenzyme A (acetyl-CoA). HMG1 catalyzes the reduction of hydroxymethylglutaryl-CoA (HMG-CoA) to mevalonate. The first module starts with the action of the cytosolic acetyl-CoA acetyltransferase ERG10 that catalyzes the formation of acetoacetyl-CoA. The hydroxymethylglutaryl-CoA synthase ERG13 then condenses acetyl-CoA with acetoacetyl-CoA to form HMG-CoA. The 3-hydroxy-3-methylglutaryl-coenzyme A (HMG-CoA) reductase HMG1 finally reduces HMG-CoA to produce mevalonate. The protein is 3-hydroxy-3-methylglutaryl-coenzyme A reductase 1 of Candida albicans (strain SC5314 / ATCC MYA-2876) (Yeast).